The primary structure comprises 558 residues: MASLVSGDKEAQISGDPGSKRGGWITFPFMLATLLGLSVTSFGWVMNLIVFLIEEFNIKSIAAAQISNVANGCLSMLPVVAAILADSFFGNIPVIAASSFISLLGIVLLTLIASLDYLRPRPCEAGSVLCTPPSKLHLGILYTALALVTTGAGGTRFTMASAGANQYEKPKEQGSFFNWYFLTLYAGAITGATAIVYIQDNASWKLGFGLCAAANLISFIVFVSGKRYYKHDKPMGSPFTSLIRVVVSATVKRKAVISCNEEDYHHYGLEKEVKTSAAMPSKSFRFLNRAALMTKDDLNQKEGSVNNIWRLCSVQEVEDFKAILRVFPLWLSIIFVSTPMVMQTSLIVLQALVTDRGLGPNFKVPAGSLQVIIIITACIVIIMNNWLVFPMYKKLTHKLLTPLQKVGIGQVLTILSMALSAVVEAKRLKTVENGHPMSVLWLFPPLVIVGIGEAFQFPANIELFYGEFPESLRNTATSLTSVVIGISFYLSTALIDLIQRTTAWLPNDINHGRVDNVYWLLVIGGILNFGYFLVCSWVYKYRNLKDNDQEQDPKDGTM.

12 consecutive transmembrane segments (helical) span residues 33–53, 69–89, 92–112, 128–148, 176–196, 203–223, 329–349, 371–391, 403–423, 439–459, 478–498, and 517–537; these read TLLG…VFLI, VANG…DSFF, IPVI…LTLI, VLCT…LALV, FFNW…TAIV, SWKL…IVFV, LWLS…LIVL, VIII…VFPM, LQKV…SAVV, VLWL…QFPA, SLTS…IDLI, and VYWL…VCSW.

Belongs to the major facilitator superfamily. Proton-dependent oligopeptide transporter (POT/PTR) (TC 2.A.17) family. As to expression, expressed in flowers, siliques and root epidermis or cortex. Detected in shoots.

The protein resides in the membrane. In terms of biological role, transporter involved in a passive nitrate efflux. The sequence is that of Protein NRT1/ PTR FAMILY 2.3 (NPF2.3) from Arabidopsis thaliana (Mouse-ear cress).